Here is a 239-residue protein sequence, read N- to C-terminus: Fatty acid metabolism regulator protein (239 aa).

Residues Q6 to F74 form the HTH gntR-type domain. A DNA-binding region (H-T-H motif) is located at residues E34–Q53.

Homodimer.

Its subcellular location is the cytoplasm. Functionally, multifunctional regulator of fatty acid metabolism. The protein is Fatty acid metabolism regulator protein of Klebsiella pneumoniae (strain 342).